The sequence spans 1308 residues: Chromosome partition protein Smc (1308 aa).

An ATP-binding site is contributed by 34–41 (PNGCGKSN). Residues 115–181 (AAREASMEEV…VAEGQPSDAQ (67 aa)) are disordered. Positions 137 to 169 (TEAEATEQQAAPSEGAAPTTEATAPSTENEAAP) are enriched in low complexity. A coiled-coil region spans residues 278-600 (ITKYKTKKRL…DTLRAEYATL (323 aa)). In terms of domain architecture, SMC hinge spans 637–757 (AGVLADFLEV…VPDPAIGREL (121 aa)). Coiled coils occupy residues 791 to 1046 (SLKR…ELHA) and 1110 to 1148 (MALEEYKETAQRHEFLETQRKDLLDSIENTQNTIKEIDQ).

This sequence belongs to the SMC family. As to quaternary structure, homodimer.

The protein resides in the cytoplasm. Functionally, required for chromosome condensation and partitioning. The protein is Chromosome partition protein Smc of Koribacter versatilis (strain Ellin345).